Reading from the N-terminus, the 623-residue chain is ATP-dependent zinc metalloprotease FtsH (623 aa).

Topologically, residues 1-7 (MNQSFWR) are cytoplasmic. A helical membrane pass occupies residues 8–28 (PLFAILLFMLVFHLTNIFFAQ). The Periplasmic portion of the chain corresponds to 29–117 (QGAQVAQISY…EVSALSTETP (89 aa)). Residues 118–138 (LLLNALIYVAPWVILIAIWWV) form a helical membrane-spanning segment. Over 139–623 (GMRSMRSQGP…SLNTAQAPPP (485 aa)) the chain is Cytoplasmic. Residue 214–221 (GPPGTGKT) coordinates ATP. Residue His-435 participates in Zn(2+) binding. Glu-436 is an active-site residue. Residues His-439 and Asp-511 each coordinate Zn(2+).

This sequence in the central section; belongs to the AAA ATPase family. It in the C-terminal section; belongs to the peptidase M41 family. Homohexamer. The cofactor is Zn(2+).

Its subcellular location is the cell inner membrane. Its function is as follows. Acts as a processive, ATP-dependent zinc metallopeptidase for both cytoplasmic and membrane proteins. Plays a role in the quality control of integral membrane proteins. This chain is ATP-dependent zinc metalloprotease FtsH, found in Pelobacter propionicus (strain DSM 2379 / NBRC 103807 / OttBd1).